A 325-amino-acid chain; its full sequence is Lipoyl synthase (325 aa).

The disordered stretch occupies residues 1–24 (MPIAPDRVRHPEKANRPDNPIQRK). Residues Cys54, Cys59, Cys65, Cys80, Cys84, Cys87, and Ser293 each coordinate [4Fe-4S] cluster. The region spanning 66–282 (WKKKHATFMI…VTVGRGKGFL (217 aa)) is the Radical SAM core domain.

The protein belongs to the radical SAM superfamily. Lipoyl synthase family. It depends on [4Fe-4S] cluster as a cofactor.

It is found in the cytoplasm. The enzyme catalyses [[Fe-S] cluster scaffold protein carrying a second [4Fe-4S](2+) cluster] + N(6)-octanoyl-L-lysyl-[protein] + 2 oxidized [2Fe-2S]-[ferredoxin] + 2 S-adenosyl-L-methionine + 4 H(+) = [[Fe-S] cluster scaffold protein] + N(6)-[(R)-dihydrolipoyl]-L-lysyl-[protein] + 4 Fe(3+) + 2 hydrogen sulfide + 2 5'-deoxyadenosine + 2 L-methionine + 2 reduced [2Fe-2S]-[ferredoxin]. The protein operates within protein modification; protein lipoylation via endogenous pathway; protein N(6)-(lipoyl)lysine from octanoyl-[acyl-carrier-protein]: step 2/2. Its function is as follows. Catalyzes the radical-mediated insertion of two sulfur atoms into the C-6 and C-8 positions of the octanoyl moiety bound to the lipoyl domains of lipoate-dependent enzymes, thereby converting the octanoylated domains into lipoylated derivatives. In Rhodospirillum centenum (strain ATCC 51521 / SW), this protein is Lipoyl synthase.